The sequence spans 187 residues: Cytochrome b-245 chaperone 1 (187 aa).

Residues 20 to 42 (GIRSWSLLVGILSIGLAAAYYSG) traverse the membrane as a helical segment. Position 168 is a phosphoserine (S168).

This sequence belongs to the CYBC1 family. In terms of assembly, interacts with CYBB; CYBC1 may act as a chaperone stabilizing Cytochrome b-245 heterodimer. As to expression, highly expressed in macrophages, neutrophils and monocytes.

The protein resides in the endoplasmic reticulum membrane. In terms of biological role, functions as a chaperone necessary for a stable expression of the CYBA and CYBB subunits of the cytochrome b-245 heterodimer. Controls the phagocyte respiratory burst and is essential for innate immunity. The protein is Cytochrome b-245 chaperone 1 of Homo sapiens (Human).